The primary structure comprises 325 residues: MKEKIYEYKDDHNWFISQWSKVGSSTYYEEEAEETYSSIEQSLRGLLDEGNSFILTVIKINSNIALVRFILKMLNEEQQDNFKVSSHKGAILVTQGQQLLLVCLPKKGITITDFFEKEKKVSELGDTILIATRNEGKTKEFSQMFAQLGIKVENLNQYPDLPEVEETGLTFEENARLKAETISHLTGQMVLADDSGLKVDVLGGLPGIWSARFSGLDATDQSNNAKLLHELAMVFDIKDRSAQFHTTLVVAAPDKESLVVEADWSGYIDFAPKGNNGFGYDPLFLVGETGKTAAELSNHEKNIISHRGQAVKKLMEVFPAWQNAH.

Residues 1–128 (MKEKIYEYKD…KKVSELGDTI (128 aa)) form a unknown region. The interval 129-324 (LIATRNEGKT…MEVFPAWQNA (196 aa)) is NTP pyrophosphatase. Position 132–137 (132–137 (TRNEGK)) interacts with substrate. Residues glutamate 165 and aspartate 194 each coordinate Mg(2+). The active-site Proton acceptor is the aspartate 194. Residues serine 195, 278–281 (FGYD), lysine 301, and 306–307 (HR) each bind substrate.

The protein belongs to the HAM1 NTPase family. As to quaternary structure, homodimer. The cofactor is Mg(2+).

It carries out the reaction XTP + H2O = XMP + diphosphate + H(+). The catalysed reaction is dITP + H2O = dIMP + diphosphate + H(+). It catalyses the reaction ITP + H2O = IMP + diphosphate + H(+). Pyrophosphatase that catalyzes the hydrolysis of nucleoside triphosphates to their monophosphate derivatives, with a high preference for the non-canonical purine nucleotides XTP (xanthosine triphosphate), dITP (deoxyinosine triphosphate) and ITP. Seems to function as a house-cleaning enzyme that removes non-canonical purine nucleotides from the nucleotide pool, thus preventing their incorporation into DNA/RNA and avoiding chromosomal lesions. The polypeptide is dITP/XTP pyrophosphatase (Streptococcus mutans serotype c (strain ATCC 700610 / UA159)).